Consider the following 450-residue polypeptide: tRNA-2-methylthio-N(6)-dimethylallyladenosine synthase (450 aa).

In terms of domain architecture, MTTase N-terminal spans 8-124 (RTLHITTWGC…LPELIAEIEA (117 aa)). Residues Cys17, Cys52, Cys87, Cys162, Cys166, and Cys169 each contribute to the [4Fe-4S] cluster site. The 233-residue stretch at 148–380 (ASQGPIAFLA…QAVLRDQQHA (233 aa)) folds into the Radical SAM core domain. Residues 383 to 445 (RAQVGRSFEV…PNSLMASLTQ (63 aa)) enclose the TRAM domain.

It belongs to the methylthiotransferase family. MiaB subfamily. Monomer. [4Fe-4S] cluster serves as cofactor.

The protein localises to the cytoplasm. It carries out the reaction N(6)-dimethylallyladenosine(37) in tRNA + (sulfur carrier)-SH + AH2 + 2 S-adenosyl-L-methionine = 2-methylsulfanyl-N(6)-dimethylallyladenosine(37) in tRNA + (sulfur carrier)-H + 5'-deoxyadenosine + L-methionine + A + S-adenosyl-L-homocysteine + 2 H(+). Its function is as follows. Catalyzes the methylthiolation of N6-(dimethylallyl)adenosine (i(6)A), leading to the formation of 2-methylthio-N6-(dimethylallyl)adenosine (ms(2)i(6)A) at position 37 in tRNAs that read codons beginning with uridine. The protein is tRNA-2-methylthio-N(6)-dimethylallyladenosine synthase of Acidiphilium cryptum (strain JF-5).